The primary structure comprises 382 residues: MENKQCDHLTDWFSTTSDASESMDTTPPLPPPTPSVDPSYSGAAADEDLYSDISEGDLEYSDCDSASESDEDDDDCLIPSKEKAREVAASFGYTVIKTLTPGSEGRVMVATKDGQPEPVVLKIGQKGTTLIEAMMLRNVNHPSVIQMKDTLVSGAITCMVLPHYSSDLYTFLTKESRRIPIDQALIIEKQILEGLRYLHAQRIIHRDVKTENIFINSVDQVCIADFGAAQFPVVEPADLGLAGTVETNAPEVLARAKYNSKADIWSAGIVLFEMLAYPSTLFEDPPSTPEEYVKSCHSQLLKIISTLKINPEEFPRDPGSRLVRGYIEYSRLERNAYTRYPCFQRVNLHIDGEFLVHKMLAFNAAMRPSAEELLSYPMFAQL.

The span at 1–10 (MENKQCDHLT) shows a compositional bias: basic and acidic residues. The tract at residues 1-75 (MENKQCDHLT…ASESDEDDDD (75 aa)) is disordered. Residues 12–24 (WFSTTSDASESMD) are compositionally biased toward polar residues. The segment covering 45 to 75 (ADEDLYSDISEGDLEYSDCDSASESDEDDDD) has biased composition (acidic residues). The 287-residue stretch at 93 to 379 (YTVIKTLTPG…AEELLSYPMF (287 aa)) folds into the Protein kinase domain. Residues 99–107 (LTPGSEGRV) and Lys122 contribute to the ATP site. The active-site Proton acceptor is Asp207.

It belongs to the protein kinase superfamily. Ser/Thr protein kinase family.

The catalysed reaction is L-seryl-[protein] + ATP = O-phospho-L-seryl-[protein] + ADP + H(+). It catalyses the reaction L-threonyl-[protein] + ATP = O-phospho-L-threonyl-[protein] + ADP + H(+). The polypeptide is Serine/threonine-protein kinase (US2) (Equus caballus (Horse)).